Reading from the N-terminus, the 475-residue chain is Polyphosphate:AMP phosphotransferase (475 aa).

PPK2 stretches follow at residues 18-222 and 256-472; these read LDLI…LTAL and ANYK…KADR.

It belongs to the polyphosphate kinase 2 (PPK2) family. Class II subfamily. As to quaternary structure, homodimer and homotetramer. Mg(2+) serves as cofactor.

It carries out the reaction [phosphate](n) + ADP = [phosphate](n+1) + AMP. Its function is as follows. Uses inorganic polyphosphate (polyP) as a donor to convert AMP to ADP. Can also use GMP, UMP, CMP, TMP or deoxyribonucleoside monophosphates, with lower efficiency. Cannot use low-molecular weight polyP as donors. Can also catalyze the synthesis of polyP from ADP or GDP, with lower efficiency. This Acinetobacter johnsonii protein is Polyphosphate:AMP phosphotransferase.